A 185-amino-acid polypeptide reads, in one-letter code: MFPLNFHYEDVLRQDLLLKLNYANVMEVPGLCEIRVVPKAPYNFIIKNGKLAMEIPCGQKFIQTQRGSTGKSFRSNPFLGSNKDKGYVSDLARQSTLRGHGMSNFLVRILTVMSLLDFPVEIRKNSIQFSMETEFCEFSPELEDHFEIFEHIRGFNVTIITSANTQDETLLLWSGFLQKDEGETQ.

It belongs to the universal ribosomal protein uL5 family. As to quaternary structure, component of the mitochondrial ribosome large subunit.

The protein resides in the mitochondrion. The protein is Large ribosomal subunit protein uL5m (RPL5) of Arabidopsis thaliana (Mouse-ear cress).